Consider the following 186-residue polypeptide: UPF0397 protein LCABL_04350 (186 aa).

A run of 5 helical transmembrane segments spans residues 12-32 (VVAI…AVIP), 45-65 (GFLG…IGFL), 77-97 (TPWW…GLFW), 112-132 (IVSF…LIAP), and 150-170 (GIVS…ILLV).

Belongs to the UPF0397 family.

It is found in the cell membrane. This Lacticaseibacillus casei (strain BL23) (Lactobacillus casei) protein is UPF0397 protein LCABL_04350.